Reading from the N-terminus, the 580-residue chain is Mucolipin-1 (580 aa).

The segment at 1-38 (MTAPAGPRGSETERLLTPNPGYGTQAGPSPAPPTPPEE) is disordered. Residues 1 to 65 (MTAPAGPRGS…FRAKGRKPCK (65 aa)) are Cytoplasmic-facing. Position 10 is a phosphoserine (serine 10). The short motif at 11-16 (ETERLL) is the Dileucine motif; mediates targeting to lysosomes element. The segment at 42-62 (RRRLKYFFMSPCDKFRAKGRK) is interaction with phosphoinositides. Residues 66–86 (LMLQVVKILVVTVQLILFGLS) form a helical membrane-spanning segment. Residues 87–298 (NQLAVTFREE…VFQHGDNSFR (212 aa)) lie on the Extracellular side of the membrane. The extracellular/lumenal pore loop stretch occupies residues 107 to 121 (LGYSDGADDTFAAYT). Cysteines 166 and 192 form a disulfide. N-linked (GlcNAc...) asparagine glycosylation is present at asparagine 230. A disulfide bond links cysteine 253 and cysteine 284. Residues 299-321 (LLFDVVVILTCSLSFLLCARSLL) traverse the membrane as a helical segment. The Cytoplasmic segment spans residues 322–350 (RGFLLQNEFVGFMWRQRGRVISLWERLEF). The helical transmembrane segment at 351–371 (VNGWYILLVTSDVLTISGTIM) threads the bilayer. The Extracellular segment spans residues 372-382 (KIGIEAKNLAS). The chain crosses the membrane as a helical span at residues 383–405 (YDVCSILLGTSTLLVWVGVIRYL). Over 406–427 (TFFHNYNILIATLRVALPSVMR) the chain is Cytoplasmic. A helical membrane pass occupies residues 428–448 (FCCCVAVIYLGYCFCGWIVLG). Topologically, residues 449–456 (PYHVKFRS) are extracellular. Residues 457–477 (LSMVSECLFSLINGDDMFVTF) constitute an intramembrane region (pore-forming). The Selectivity filter signature appears at 469–474 (NGDDMF). Residues 478–491 (AAMQAQQGRSSLVW) are Extracellular-facing. Residues 492–513 (LFSQLYLYSFISLFIYMVLSLF) traverse the membrane as a helical segment. Topologically, residues 514–580 (IALITGAYDT…PSEEHSLLVN (67 aa)) are cytoplasmic. Phosphoserine; by PAK is present on residues serine 557 and serine 559. Residues 565–567 (CCC) form a required for palmitoylation and association with membranes region. Positions 573 to 578 (EEHSLL) match the Dileucine internalization motif; mediates AP2 complex-dependent internalization motif.

Belongs to the transient receptor (TC 1.A.4) family. Polycystin subfamily. MCOLN1 sub-subfamily. Homotetramer. Homooligomer. Can heterooligomerize with MCOLN2 or MCOLN3; heteromeric assemblies have different channel properties as compared to the respective homooligomers and may be tissue-specific. Interacts with PDCD6. Interacts with TMEM163. Interacts with LAPTM4B. Post-translationally, palmitoylated; involved in association with membranes. Phosphorylation by PKA inhibits channel activity. Dephosphorylation increases activity. In terms of processing, proteolytically cleaved probably involving multiple lysosomal proteases including cathepsin B; inhibits lysosomal channel activity. As to expression, widely expressed in adult and fetal tissues.

The protein resides in the late endosome membrane. Its subcellular location is the lysosome membrane. It localises to the cytoplasmic vesicle membrane. The protein localises to the cell projection. It is found in the phagocytic cup. The protein resides in the cytoplasmic vesicle. Its subcellular location is the phagosome membrane. It localises to the cell membrane. The catalysed reaction is Ca(2+)(in) = Ca(2+)(out). The enzyme catalyses Fe(2+)(in) = Fe(2+)(out). It carries out the reaction Mg(2+)(in) = Mg(2+)(out). It catalyses the reaction K(+)(in) = K(+)(out). The catalysed reaction is Na(+)(in) = Na(+)(out). Channel activity is controlled by multiple regulatory mechanisms in different subcellular compartments. Channel function is transiently modulated by changes in Ca(2+) in a pH-dependent manner; pH changes modify the aggregation state of unitary channels; a negative cooperativity between extracellular/lumenal Ca(2+) and H(+) is suggested. Regulated by phosphoinositides in a compartment-specific manner: in lysosomes activated by PtdIns(3,5)P2 (Phosphatidylinositol 3,5-bisphosphate) and at the plasma membrane inhibited by PtdIns(4,5)P2 (Phosphatidylinositol 4,5-bisphosphate). In terms of biological role, nonselective cation channel probably playing a role in the regulation of membrane trafficking events and of metal homeostasis. Acts as a Ca(2+)-permeable cation channel with inwardly rectifying activity. Proposed to play a major role in Ca(2+) release from late endosome and lysosome vesicles to the cytoplasm, which is important for many lysosome-dependent cellular events, including the fusion and trafficking of these organelles, exocytosis and autophagy. Required for efficient uptake of large particles in macrophages in which Ca(2+) release from the lysosomes triggers lysosomal exocytosis. May also play a role in phagosome-lysosome fusion. Involved in lactosylceramide trafficking indicative for a role in the regulation of late endocytic membrane fusion/fission events. By mediating lysosomal Ca(2+) release is involved in regulation of mTORC1 signaling and in mTOR/TFEB-dependent lysosomal adaptation to environmental cues such as nutrient levels. Seems to act as lysosomal active oxygen species (ROS) sensor involved in ROS-induced TFEB activation and autophagy. Also functions as a Fe(2+) permeable channel in late endosomes and lysosomes. Also permeable to Mg(2+), Na(+). K(+) and Cs(+). Proposed to play a role in zinc homeostasis probably implicating its association with TMEM163 In adaptive immunity, TRPML2 and TRPML1 may play redundant roles in the function of the specialized lysosomes of B cells. May contribute to cellular lipase activity within the late endosomal pathway or at the cell surface which may be involved in processes of membrane reshaping and vesiculation, especially the growth of tubular structures. However, it is not known, whether it conveys the enzymatic activity directly, or merely facilitates the activity of an associated phospholipase. This chain is Mucolipin-1, found in Homo sapiens (Human).